Reading from the N-terminus, the 1017-residue chain is Peroxisomal ATPase PEX6 (1017 aa).

758-765 (GPPGTGKT) is an ATP binding site.

Belongs to the AAA ATPase family. As to quaternary structure, interacts with PEX1; forming the PEX1-PEX6 AAA ATPase complex, which is composed of a heterohexamer formed by a trimer of PEX1-PEX6 dimers.

The protein localises to the cytoplasm. It is found in the cytosol. The protein resides in the peroxisome membrane. It carries out the reaction ATP + H2O = ADP + phosphate + H(+). Functionally, component of the PEX1-PEX6 AAA ATPase complex, a protein dislocase complex that mediates the ATP-dependent extraction of the PEX5 receptor from peroxisomal membranes, an essential step for PEX5 recycling. Specifically recognizes PEX5 monoubiquitinated at 'Cys-6', and pulls it out of the peroxisome lumen through the PEX2-PEX10-PEX12 retrotranslocation channel. Extraction by the PEX1-PEX6 AAA ATPase complex is accompanied by unfolding of the TPR repeats and release of bound cargo from PEX5. This Candida glabrata (strain ATCC 2001 / BCRC 20586 / JCM 3761 / NBRC 0622 / NRRL Y-65 / CBS 138) (Yeast) protein is Peroxisomal ATPase PEX6 (PEX6).